A 64-amino-acid chain; its full sequence is Large ribosomal subunit protein bL35 (64 aa).

Belongs to the bacterial ribosomal protein bL35 family.

The chain is Large ribosomal subunit protein bL35 from Amoebophilus asiaticus (strain 5a2).